The primary structure comprises 114 residues: SOSS complex subunit C homolog (114 aa).

Positions 1-10 are enriched in polar residues; that stretch reads MAFQQHGNQE. A disordered region spans residues 1–61; sequence MAFQQHGNQE…AGNTSASRIH (61 aa).

Belongs to the SOSS-C family.

The chain is SOSS complex subunit C homolog from Nematostella vectensis (Starlet sea anemone).